A 123-amino-acid polypeptide reads, in one-letter code: Large ribosomal subunit protein uL14 (123 aa).

The protein belongs to the universal ribosomal protein uL14 family. Part of the 50S ribosomal subunit. Forms a cluster with proteins L3 and L19. In the 70S ribosome, L14 and L19 interact and together make contacts with the 16S rRNA in bridges B5 and B8.

Binds to 23S rRNA. Forms part of two intersubunit bridges in the 70S ribosome. This Aliivibrio salmonicida (strain LFI1238) (Vibrio salmonicida (strain LFI1238)) protein is Large ribosomal subunit protein uL14.